The sequence spans 226 residues: Ribose-5-phosphate isomerase A (226 aa).

Residues 29 to 32 (TGST), 84 to 87 (DGAD), and 97 to 100 (KGGG) each bind substrate. The Proton acceptor role is filled by Glu106. Lys124 lines the substrate pocket.

This sequence belongs to the ribose 5-phosphate isomerase family. Homodimer.

It carries out the reaction aldehydo-D-ribose 5-phosphate = D-ribulose 5-phosphate. It participates in carbohydrate degradation; pentose phosphate pathway; D-ribose 5-phosphate from D-ribulose 5-phosphate (non-oxidative stage): step 1/1. Catalyzes the reversible conversion of ribose-5-phosphate to ribulose 5-phosphate. The protein is Ribose-5-phosphate isomerase A of Methanothermobacter thermautotrophicus (strain ATCC 29096 / DSM 1053 / JCM 10044 / NBRC 100330 / Delta H) (Methanobacterium thermoautotrophicum).